Here is a 1064-residue protein sequence, read N- to C-terminus: Lethal(2) giant larvae protein homolog 1 (1064 aa).

WD repeat units follow at residues 38–71, 78–119, 139–176, 200–234, 240–272, 290–332, 340–374, 396–474, 518–593, 602–663, 723–783, 792–844, 849–902, and 916–939; these read SALA…FTGL, VTQM…ALSF, VTVV…GQTL, SLQG…DHIF, LESL…GSFP, AINK…ETLV, IIDF…VLDL, TCSA…YKLS, QKVA…RVLV, TAVT…LRQS, VRCL…KEVQ, AIAV…VSAK, LTAH…VHYS, and VFTR…SLSA. At serine 663 the chain carries Phosphoserine. Threonine 958 is subject to Phosphothreonine. The disordered stretch occupies residues 966-1010; the sequence is ESPKLSQANGTPSILLAPQSLDGSPDPAHSMGPDTPEPPEAALSP. 2 positions are modified to phosphoserine: serine 967 and serine 985.

This sequence belongs to the WD repeat L(2)GL family. In terms of assembly, associated with nonmuscle myosin II heavy chain. Interacts with PRKCI/aPKC, PARD6B/Par-6 and PARD6A. Interacts with STX4A. Interacts with RAB10 (GDP-bound form); the interaction is direct and promotes RAB10 association with membranes and activation through competition with the Rab inhibitor GDI1. Interacts with DCAF1. In terms of processing, phosphorylated at least at Ser-663 by PRKCI. Expressed in brain, kidney, and muscle but is barely seen in heart and placenta. Down-regulated or lost in all cell lines and in most of the tumor samples analyzed. Loss was associated with advanced stage of the disease.

Its subcellular location is the early endosome membrane. The protein resides in the golgi apparatus. The protein localises to the trans-Golgi network membrane. It localises to the golgi apparatus membrane. It is found in the cell projection. Its subcellular location is the axon. The protein resides in the cytoplasm. The protein localises to the cytoskeleton. Its function is as follows. Cortical cytoskeleton protein found in a complex involved in maintaining cell polarity and epithelial integrity. Involved in the regulation of mitotic spindle orientation, proliferation, differentiation and tissue organization of neuroepithelial cells. Involved in axonogenesis through RAB10 activation thereby regulating vesicular membrane trafficking toward the axonal plasma membrane. The polypeptide is Lethal(2) giant larvae protein homolog 1 (LLGL1) (Homo sapiens (Human)).